The following is a 355-amino-acid chain: Peptide chain release factor 1 (355 aa).

Gln-231 carries the N5-methylglutamine modification. Residues 280–293 (KERKAKEQSERKDQ) are compositionally biased toward basic and acidic residues. The disordered stretch occupies residues 280–307 (KERKAKEQSERKDQVGTGDRSGRIRTYN).

This sequence belongs to the prokaryotic/mitochondrial release factor family. Post-translationally, methylated by PrmC. Methylation increases the termination efficiency of RF1.

The protein localises to the cytoplasm. In terms of biological role, peptide chain release factor 1 directs the termination of translation in response to the peptide chain termination codons UAG and UAA. The polypeptide is Peptide chain release factor 1 (Campylobacter hominis (strain ATCC BAA-381 / DSM 21671 / CCUG 45161 / LMG 19568 / NCTC 13146 / CH001A)).